Here is an 82-residue protein sequence, read N- to C-terminus: Turripeptide OL139 (82 aa).

Residues 58-82 (HRTTRDTADKTHGGSQRDRFFQSIA) are disordered.

Post-translationally, contains 6 disulfide bonds. In terms of tissue distribution, expressed by the venom duct.

Its subcellular location is the secreted. In terms of biological role, acts as a neurotoxin by inhibiting an ion channel. This is Turripeptide OL139 from Iotyrris olangoensis (Sea snail).